The primary structure comprises 362 residues: Holliday junction branch migration complex subunit RuvB (362 aa).

The segment at 1-27 is disordered; that stretch reads MANIEKTEFHVPAPVSAAGNQKSSLGN. Residues 13-206 form a large ATPase domain (RuvB-L) region; the sequence is APVSAAGNQK…FGFTAQMEFY (194 aa). Residues Leu-45, Arg-46, Gly-87, Lys-90, Thr-91, Thr-92, 153–155, Arg-196, Tyr-206, and Arg-243 contribute to the ATP site; that span reads EDF. Thr-91 serves as a coordination point for Mg(2+). The tract at residues 207–277 is small ATPAse domain (RuvB-S); it reads EVEDLTKVVV…AAQAALVVFD (71 aa). A head domain (RuvB-H) region spans residues 280-362; that stretch reads EMGLDRLDRA…EPPEGIIGSL (83 aa). Residues Arg-335 and Arg-340 each contribute to the DNA site.

It belongs to the RuvB family. In terms of assembly, homohexamer. Forms an RuvA(8)-RuvB(12)-Holliday junction (HJ) complex. HJ DNA is sandwiched between 2 RuvA tetramers; dsDNA enters through RuvA and exits via RuvB. An RuvB hexamer assembles on each DNA strand where it exits the tetramer. Each RuvB hexamer is contacted by two RuvA subunits (via domain III) on 2 adjacent RuvB subunits; this complex drives branch migration. In the full resolvosome a probable DNA-RuvA(4)-RuvB(12)-RuvC(2) complex forms which resolves the HJ.

It localises to the cytoplasm. It catalyses the reaction ATP + H2O = ADP + phosphate + H(+). In terms of biological role, the RuvA-RuvB-RuvC complex processes Holliday junction (HJ) DNA during genetic recombination and DNA repair, while the RuvA-RuvB complex plays an important role in the rescue of blocked DNA replication forks via replication fork reversal (RFR). RuvA specifically binds to HJ cruciform DNA, conferring on it an open structure. The RuvB hexamer acts as an ATP-dependent pump, pulling dsDNA into and through the RuvAB complex. RuvB forms 2 homohexamers on either side of HJ DNA bound by 1 or 2 RuvA tetramers; 4 subunits per hexamer contact DNA at a time. Coordinated motions by a converter formed by DNA-disengaged RuvB subunits stimulates ATP hydrolysis and nucleotide exchange. Immobilization of the converter enables RuvB to convert the ATP-contained energy into a lever motion, pulling 2 nucleotides of DNA out of the RuvA tetramer per ATP hydrolyzed, thus driving DNA branch migration. The RuvB motors rotate together with the DNA substrate, which together with the progressing nucleotide cycle form the mechanistic basis for DNA recombination by continuous HJ branch migration. Branch migration allows RuvC to scan DNA until it finds its consensus sequence, where it cleaves and resolves cruciform DNA. In Corynebacterium diphtheriae (strain ATCC 700971 / NCTC 13129 / Biotype gravis), this protein is Holliday junction branch migration complex subunit RuvB.